Reading from the N-terminus, the 380-residue chain is uncharacterized protein (380 aa).

Positions 1–18 (MALRHLALLAGLLVGVAS) are cleaved as a signal peptide. 3 N-linked (GlcNAc...) asparagine glycosylation sites follow: N104, N111, and N128. The chain crosses the membrane as a helical span at residues 148-168 (LFLGTFFISSGLILSVAGFFY). Disordered stretches follow at residues 229-256 (PQTGLPGSGSRPPLPGSPGDPPTRQGQG) and 336-380 (RFSG…ISNV). Pro residues predominate over residues 240–249 (PPLPGSPGDP). A compositionally biased stretch (basic and acidic residues) spans 356–366 (VRRERPLDRAT).

It localises to the membrane. This is an uncharacterized protein from Homo sapiens (Human).